Here is a 302-residue protein sequence, read N- to C-terminus: Phosphoribosylaminoimidazole-succinocarboxamide synthase (302 aa).

The protein belongs to the SAICAR synthetase family.

It catalyses the reaction 5-amino-1-(5-phospho-D-ribosyl)imidazole-4-carboxylate + L-aspartate + ATP = (2S)-2-[5-amino-1-(5-phospho-beta-D-ribosyl)imidazole-4-carboxamido]succinate + ADP + phosphate + 2 H(+). Its pathway is purine metabolism; IMP biosynthesis via de novo pathway; 5-amino-1-(5-phospho-D-ribosyl)imidazole-4-carboxamide from 5-amino-1-(5-phospho-D-ribosyl)imidazole-4-carboxylate: step 1/2. The chain is Phosphoribosylaminoimidazole-succinocarboxamide synthase from Cupriavidus taiwanensis (strain DSM 17343 / BCRC 17206 / CCUG 44338 / CIP 107171 / LMG 19424 / R1) (Ralstonia taiwanensis (strain LMG 19424)).